A 230-amino-acid chain; its full sequence is MRLTVELIQNSLSYINPLKDRELDLRDNDISSLGNFPFFPRLRMLLLARNRVRQIQPSLANSIPGLTTLVLTANNIAELADLDPLRNLTKLTHLVLLENPVTRKEYYRLWIIWRIPSVRFLDYQKVKDAERAKAAELFGTATEPTALASKILGVKSRTFDIPSGGAADQPPPEKRLRVKLTDSERKRIEKMIREAKSLQEITRLERELNEGRIPGGALDGAGNDGDQMQL.

3 LRR repeats span residues 19-40, 41-62, and 65-86; these read KDRE…PFFP, RLRM…LANS, and GLTT…DPLR. Positions 99–137 constitute an LRRCT domain; the sequence is NPVTRKEYYRLWIIWRIPSVRFLDYQKVKDAERAKAAEL. The disordered stretch occupies residues 211 to 230; the sequence is GRIPGGALDGAGNDGDQMQL. Over residues 213–223 the composition is skewed to gly residues; sequence IPGGALDGAGN.

This sequence belongs to the U2 small nuclear ribonucleoprotein A family. Associated with the spliceosome.

Its subcellular location is the nucleus. Functionally, involved in pre-mRNA splicing. The protein is U2 small nuclear ribonucleoprotein A' (lea1) of Emericella nidulans (strain FGSC A4 / ATCC 38163 / CBS 112.46 / NRRL 194 / M139) (Aspergillus nidulans).